Consider the following 174-residue polypeptide: uncharacterized protein (174 aa).

It belongs to the mimivirus L39/R874 family.

This is an uncharacterized protein from Acanthamoeba polyphaga (Amoeba).